Here is a 432-residue protein sequence, read N- to C-terminus: Septin-14 (432 aa).

The Septin-type G domain occupies glutamine 49–lysine 315. Residues glycine 59 to serine 66 are G1 motif. GTP contacts are provided by residues glycine 59–serine 66, glycine 114, lysine 195–aspartate 203, glycine 249, and arginine 264. The tract at residues glutamate 111–glycine 114 is G3 motif. Positions alanine 194–aspartate 197 are G4 motif. The stretch at glutamate 332 to alanine 412 forms a coiled coil. The segment at glutamate 369 to lysine 432 is required for interaction with SEPTIN4. Required for migration of cortical neurons during corticogenesis.

Belongs to the TRAFAC class TrmE-Era-EngA-EngB-Septin-like GTPase superfamily. Septin GTPase family. Septins polymerize into heterooligomeric protein complexes that form filaments, and can associate with cellular membranes, actin filaments and microtubules. GTPase activity is required for filament formation. Interacts with ACTN4. Interacts with SEPTIN9. Interacts (via C-terminus) with SEPTIN4. Testis-specific (at protein level).

The protein resides in the cytoplasm. It localises to the cytoskeleton. The protein localises to the cell projection. It is found in the axon. Its subcellular location is the dendrite. The protein resides in the perikaryon. It localises to the perinuclear region. The protein localises to the cytoplasmic vesicle. It is found in the secretory vesicle. Its subcellular location is the acrosome. In terms of biological role, filament-forming cytoskeletal GTPase. Involved in the migration of cortical neurons and the formation of neuron leading processes during embryonic development. Plays a role in sperm head formation during spermiogenesis, potentially via facilitating localization of ACTN4 to cell filaments. In Homo sapiens (Human), this protein is Septin-14.